Here is a 165-residue protein sequence, read N- to C-terminus: Pyruvoyl-dependent arginine decarboxylase (165 aa).

Serine 53 carries the pyruvic acid (Ser) modification.

This sequence belongs to the PdaD family. It depends on pyruvate as a cofactor.

It catalyses the reaction L-arginine + H(+) = agmatine + CO2. This is Pyruvoyl-dependent arginine decarboxylase from Methanococcus aeolicus (strain ATCC BAA-1280 / DSM 17508 / OCM 812 / Nankai-3).